The following is a 144-amino-acid chain: Transcriptional regulator SlyA (144 aa).

The region spanning 2-135 (ESTLGSDLAR…LVGLIGKLEQ (134 aa)) is the HTH marR-type domain. Residues 49–72 (QIQLAKAIGIEQPSLVRTLDQLEE) constitute a DNA-binding region (H-T-H motif).

It belongs to the SlyA family. In terms of assembly, homodimer.

Transcription regulator that can specifically activate or repress expression of target genes. The chain is Transcriptional regulator SlyA from Serratia proteamaculans (strain 568).